We begin with the raw amino-acid sequence, 160 residues long: Afimbrial adhesin AFA-III (160 aa).

The first 21 residues, 1–21 (MKKLAIMAAASMVFAVSSAHA), serve as a signal peptide directing secretion. Positions 22-75 (GFTPSGTTGTTKLTVTEECQVRVGDLTVAKTRGQLTDAAPIGPVTVQALGCNAR) are receptor-binding.

The protein belongs to the Dr-adhesin family.

The protein localises to the fimbrium. Functionally, hemagglutinins of uropathogenic E.coli mediate adherence to the upper urinary tract. These adhesins bind to the Dr blood group antigen and also agglutinate human erythrocytes in the presence of D-mannose (mannose-resistant hemagglutination (MRHA)). This chain is Afimbrial adhesin AFA-III (afaE3), found in Escherichia coli.